Here is a 214-residue protein sequence, read N- to C-terminus: dITP/XTP pyrophosphatase (214 aa).

16–21 (THNPGK) contacts substrate. Mg(2+) contacts are provided by D48 and D77. The active-site Proton acceptor is the D77. Substrate contacts are provided by residues S78, 163-166 (FGYD), K186, and 198-199 (HR).

This sequence belongs to the HAM1 NTPase family. As to quaternary structure, homodimer. The cofactor is Mg(2+).

It catalyses the reaction XTP + H2O = XMP + diphosphate + H(+). It carries out the reaction dITP + H2O = dIMP + diphosphate + H(+). The enzyme catalyses ITP + H2O = IMP + diphosphate + H(+). Functionally, pyrophosphatase that catalyzes the hydrolysis of nucleoside triphosphates to their monophosphate derivatives, with a high preference for the non-canonical purine nucleotides XTP (xanthosine triphosphate), dITP (deoxyinosine triphosphate) and ITP. Seems to function as a house-cleaning enzyme that removes non-canonical purine nucleotides from the nucleotide pool, thus preventing their incorporation into DNA/RNA and avoiding chromosomal lesions. This Bradyrhizobium sp. (strain BTAi1 / ATCC BAA-1182) protein is dITP/XTP pyrophosphatase.